The sequence spans 270 residues: Myelin protein zero-like protein 1 (270 aa).

The signal sequence occupies residues 1 to 35; that stretch reads MAEAVGAVTLIAAPARRRWLWSALAAMLGLLTARI. Residues 36–151 form the Ig-like V-type domain; that stretch reads SALEVHTPKE…DIVVRPGQIR (116 aa). Residues 36 to 162 lie on the Extracellular side of the membrane; that stretch reads SALEVHTPKE…HVVEIDNLLV (127 aa). Asn50 and Asn130 each carry an N-linked (GlcNAc...) asparagine glycan. The cysteines at positions 58 and 135 are disulfide-linked. Residues 163 to 183 form a helical membrane-spanning segment; the sequence is FLVWVVVGTVTAVVLGLTLLI. Topologically, residues 184-270 are cytoplasmic; that stretch reads SLVLVVLYRR…SVVYADIRKD (87 aa). Positions 201–257 are disordered; that stretch reads TGCSTSERLSPVKQAPRKCPSDTEGLVKSPPSAGSHQGPVIYAQLDHSGGHHSGKIN. Ser204, Ser206, Ser210, and Ser221 each carry phosphoserine. An ITIM motif 1 motif is present at residues 240–245; that stretch reads VIYAQL. At Tyr242 the chain carries Phosphotyrosine. At Ser261 the chain carries Phosphoserine. Positions 262–267 match the ITIM motif 2 motif; it reads VVYADI. Tyr264 carries the post-translational modification Phosphotyrosine.

The protein belongs to the myelin P0 protein family. Interacts with phosphorylated PTPN11/SHP-2. Phosphorylated on tyrosine residues upon stimulation with pervanadate and concanavalin-A (ConA). Phosphorylation at Tyr-242 and Tyr-264 is required for interaction with PTPN11/SHP-2. Dephosphorylated by PTPN11/SHP-2 (in vitro). Post-translationally, N-glycosylated.

It localises to the membrane. Cell surface receptor, which is involved in signal transduction processes. Recruits PTPN11/SHP-2 to the cell membrane and is a putative substrate of PTPN11/SHP-2. Is a major receptor for concanavalin-A (ConA) and is involved in cellular signaling induced by ConA, which probably includes Src family tyrosine-protein kinases. May be involved in regulation of integrin-mediated cell motility. The polypeptide is Myelin protein zero-like protein 1 (Mpzl1) (Rattus norvegicus (Rat)).